A 256-amino-acid polypeptide reads, in one-letter code: Protein crossbronx-like (256 aa).

The 163-residue stretch at 17–179 (NQGYQVLAEY…AKASIVWSWK (163 aa)) folds into the UBC core domain.

The protein belongs to the ubiquitin-conjugating enzyme family. FTS subfamily.

The polypeptide is Protein crossbronx-like (Drosophila mojavensis (Fruit fly)).